Here is a 173-residue protein sequence, read N- to C-terminus: Co-chaperone protein HscB homolog (173 aa).

Residues 3-75 (NPFSLFNLPV…IARATAIIEI (73 aa)) enclose the J domain.

This sequence belongs to the HscB family. Interacts with HscA and stimulates its ATPase activity.

Functionally, co-chaperone involved in the maturation of iron-sulfur cluster-containing proteins. Seems to help targeting proteins to be folded toward HscA. This chain is Co-chaperone protein HscB homolog, found in Haemophilus ducreyi (strain 35000HP / ATCC 700724).